Reading from the N-terminus, the 293-residue chain is MEKGTFHIKTGFAEMFKGGVIMDVTTPEQAVIAEEAGAVAVMALERVPADIRAQGGVARMSDPKIIKEIMAAVSIPVMAKVRIGHFVEAMILEAIGVDFIDESEVLTPADEEHHIDKWKFKVPFVCGARNLGEALRRIAEGAAMIRTKGEAGTGNVVEAVRHARTMWKEIRYVQSLREDELMAYAKEIGAPFELVKWVHDHGRLPVVNFAAGGIATPADAALMMHLGMDGVFVGSGIFKSGDPRKRARAIVRAVAHYNDPEVLAEVSEDLGEPMVGINLDQLKEEERLAKRGW.

D-ribose 5-phosphate is bound at residue Asp23. Lys80 serves as the catalytic Schiff-base intermediate with D-ribose 5-phosphate. A D-ribose 5-phosphate-binding site is contributed by Gly152. Arg164 serves as a coordination point for D-glyceraldehyde 3-phosphate. D-ribose 5-phosphate-binding positions include Gly213 and Gly234–Ser235.

This sequence belongs to the PdxS/SNZ family. As to quaternary structure, in the presence of PdxT, forms a dodecamer of heterodimers.

It carries out the reaction aldehydo-D-ribose 5-phosphate + D-glyceraldehyde 3-phosphate + L-glutamine = pyridoxal 5'-phosphate + L-glutamate + phosphate + 3 H2O + H(+). Its pathway is cofactor biosynthesis; pyridoxal 5'-phosphate biosynthesis. Catalyzes the formation of pyridoxal 5'-phosphate from ribose 5-phosphate (RBP), glyceraldehyde 3-phosphate (G3P) and ammonia. The ammonia is provided by the PdxT subunit. Can also use ribulose 5-phosphate and dihydroxyacetone phosphate as substrates, resulting from enzyme-catalyzed isomerization of RBP and G3P, respectively. This Thermus thermophilus (strain ATCC BAA-163 / DSM 7039 / HB27) protein is Pyridoxal 5'-phosphate synthase subunit PdxS.